The primary structure comprises 304 residues: Glucose-6-phosphate isomerase (304 aa).

Catalysis depends on Glu-146, which acts as the Proton donor. The active site involves His-177.

It belongs to the GPI family.

It is found in the cytoplasm. The enzyme catalyses alpha-D-glucose 6-phosphate = beta-D-fructose 6-phosphate. It participates in carbohydrate degradation; glycolysis; D-glyceraldehyde 3-phosphate and glycerone phosphate from D-glucose: step 2/4. The polypeptide is Glucose-6-phosphate isomerase (PGI) (Calanus finmarchicus (Calanus tonsus)).